Consider the following 181-residue polypeptide: MGNVFGSLFKGLFGKKEMRILMVGLDAAGKTTILYKLKLGEIVTTIPTIGFNVETVEYKNISFTVWDVGGQDKIRPLWRHYFQNTQGLIFVVDSNDRERVGEAREELMRMLAEDELRDAVLLVFANKQDLPQAMNAAEVTDKLGLHSLRNRSWYIQATCATSGDGLYEGLDWLSNQLKNRS.

Residue Gly2 is the site of N-myristoyl glycine attachment. An important for the stable binding to the membranes region spans residues 3 to 16 (NVFGSLFKGLFGKK). GTP-binding positions include 24–32 (GLDAAGKTT), 126–129 (NKQD), and Ala160.

This sequence belongs to the small GTPase superfamily. Arf family.

It localises to the golgi apparatus membrane. It carries out the reaction GTP + H2O = GDP + phosphate + H(+). Its activity is regulated as follows. Alternates between an inactive GDP-bound form and an active GTP-bound form. Activated by a guanine nucleotide-exchange factor (GEF) and inactivated by GTPase-activating protein (GAP). Small GTPase involved in protein trafficking between different compartments. Modulates vesicle budding and uncoating within the Golgi complex. In its GTP-bound form, triggers the recruitment of coatomer proteins to the Golgi membrane. The hydrolysis of ARF1-bound GTP, which is mediated by ARFGAPs proteins, is required for dissociation of coat proteins from Golgi membranes and vesicles. Involved in endoplasmic reticulum dynamics during embryogenesis. Also required for adult germline function. Plays a role in cell shedding during embryogenesis probably by promoting the endocytosis of cell adhesion molecules. During neurogenesis, involved in cell autonomous Q.p neuroblast asymmetric divisions that generate one precursor cell and one apoptotic cell, probably by controlling endocytosis. Plays a role in maintaining mitochondrial morphology. This Caenorhabditis briggsae protein is ADP-ribosylation factor 1-like 2 (arf-1.2).